We begin with the raw amino-acid sequence, 234 residues long: 2,3-bisphosphoglycerate-dependent phosphoglycerate mutase (234 aa).

Substrate is bound by residues 8–15 (RHGESVWN), 21–22 (TG), Arg60, 87–90 (ERHY), Lys98, 114–115 (RR), and 183–184 (GN). His9 acts as the Tele-phosphohistidine intermediate in catalysis. The active-site Proton donor/acceptor is Glu87.

It belongs to the phosphoglycerate mutase family. BPG-dependent PGAM subfamily. In terms of assembly, homodimer.

The enzyme catalyses (2R)-2-phosphoglycerate = (2R)-3-phosphoglycerate. Its pathway is carbohydrate degradation; glycolysis; pyruvate from D-glyceraldehyde 3-phosphate: step 3/5. Functionally, catalyzes the interconversion of 2-phosphoglycerate and 3-phosphoglycerate. This chain is 2,3-bisphosphoglycerate-dependent phosphoglycerate mutase, found in Geobacter sp. (strain M21).